The chain runs to 777 residues: Zinc finger protein 786 (777 aa).

The KRAB domain maps to 9–80 (LTFEDVAIYF…WGEKKKPDKE (72 aa)). The C2H2-type 1; degenerate zinc finger occupies 194–216 (NSCPVCRENSWEKNHLVKQQKGH). The C2H2-type 2 zinc-finger motif lies at 240-262 (ISCLGCGKSFRLKQYLVRHLDIH). The C2H2-type 3; degenerate zinc finger occupies 268–291 (PQCPKCKMCFHHERTLFSHHLKNS). The C2H2-type 4; degenerate zinc-finger motif lies at 420 to 442 (VFCRKCGQGFTKHCGLTEHTRIL). C2H2-type zinc fingers lie at residues 448-470 (FWCA…QRLH), 476-498 (FQCT…QLQH), 504-526 (FSCS…LRVH), 532-554 (FQCP…QRIH), 560-582 (FSCG…FRVH), 588-610 (FQCP…QRLH), 616-638 (FQCP…QLLH), 644-665 (FSCQ…MRTH), 671-693 (FQCP…QGLH), 699-721 (FHCP…QRIH), and 727-749 (FACG…IRVH).

Belongs to the krueppel C2H2-type zinc-finger protein family.

The protein resides in the nucleus. Its function is as follows. May be involved in transcriptional regulation. The protein is Zinc finger protein 786 (Znf786) of Mus musculus (Mouse).